A 458-amino-acid chain; its full sequence is tRNA modification GTPase MnmE (458 aa).

(6S)-5-formyl-5,6,7,8-tetrahydrofolate contacts are provided by Arg23, Glu87, and Arg126. The TrmE-type G domain maps to Gly224–Phe380. Residue Asn234 coordinates K(+). GTP-binding positions include Asn234 to Ser239, Thr253 to Thr259, and Asp278 to Gly281. Ser238 contributes to the Mg(2+) binding site. K(+) is bound by residues Thr253, Ile255, and Thr258. Residue Thr259 coordinates Mg(2+). Lys458 lines the (6S)-5-formyl-5,6,7,8-tetrahydrofolate pocket.

It belongs to the TRAFAC class TrmE-Era-EngA-EngB-Septin-like GTPase superfamily. TrmE GTPase family. As to quaternary structure, homodimer. Heterotetramer of two MnmE and two MnmG subunits. It depends on K(+) as a cofactor.

It is found in the cytoplasm. Its function is as follows. Exhibits a very high intrinsic GTPase hydrolysis rate. Involved in the addition of a carboxymethylaminomethyl (cmnm) group at the wobble position (U34) of certain tRNAs, forming tRNA-cmnm(5)s(2)U34. In Clostridium perfringens (strain ATCC 13124 / DSM 756 / JCM 1290 / NCIMB 6125 / NCTC 8237 / Type A), this protein is tRNA modification GTPase MnmE.